A 372-amino-acid polypeptide reads, in one-letter code: N-methyl-L-tryptophan oxidase (372 aa).

An FAD-binding site is contributed by 4-34 (DLIIIGSGSVGAAAGYYATRAGLNVLMTDAH). An S-8alpha-FAD cysteine modification is found at C308.

Belongs to the MSOX/MTOX family. MTOX subfamily. As to quaternary structure, monomer. The cofactor is FAD.

The catalysed reaction is N(alpha)-methyl-L-tryptophan + O2 + H2O = L-tryptophan + formaldehyde + H2O2. Functionally, catalyzes the oxidative demethylation of N-methyl-L-tryptophan. The polypeptide is N-methyl-L-tryptophan oxidase (Escherichia coli (strain K12 / DH10B)).